The chain runs to 617 residues: Dihydroxy-acid dehydratase (617 aa).

Asp81 lines the Mg(2+) pocket. Position 122 (Cys122) interacts with [2Fe-2S] cluster. Asp123 and Lys124 together coordinate Mg(2+). N6-carboxylysine is present on Lys124. Cys195 lines the [2Fe-2S] cluster pocket. Residue Glu491 coordinates Mg(2+). The active-site Proton acceptor is the Ser517.

Belongs to the IlvD/Edd family. In terms of assembly, homodimer. [2Fe-2S] cluster serves as cofactor. Mg(2+) is required as a cofactor.

The catalysed reaction is (2R)-2,3-dihydroxy-3-methylbutanoate = 3-methyl-2-oxobutanoate + H2O. It carries out the reaction (2R,3R)-2,3-dihydroxy-3-methylpentanoate = (S)-3-methyl-2-oxopentanoate + H2O. It functions in the pathway amino-acid biosynthesis; L-isoleucine biosynthesis; L-isoleucine from 2-oxobutanoate: step 3/4. Its pathway is amino-acid biosynthesis; L-valine biosynthesis; L-valine from pyruvate: step 3/4. Its function is as follows. Functions in the biosynthesis of branched-chain amino acids. Catalyzes the dehydration of (2R,3R)-2,3-dihydroxy-3-methylpentanoate (2,3-dihydroxy-3-methylvalerate) into 2-oxo-3-methylpentanoate (2-oxo-3-methylvalerate) and of (2R)-2,3-dihydroxy-3-methylbutanoate (2,3-dihydroxyisovalerate) into 2-oxo-3-methylbutanoate (2-oxoisovalerate), the penultimate precursor to L-isoleucine and L-valine, respectively. The chain is Dihydroxy-acid dehydratase from Nitrosococcus oceani (strain ATCC 19707 / BCRC 17464 / JCM 30415 / NCIMB 11848 / C-107).